We begin with the raw amino-acid sequence, 157 residues long: 2-C-methyl-D-erythritol 2,4-cyclodiphosphate synthase (157 aa).

Residues aspartate 8 and histidine 10 each coordinate a divalent metal cation. 4-CDP-2-C-methyl-D-erythritol 2-phosphate-binding positions include 8-10 and 34-35; these read DVH and HS. Histidine 42 contacts a divalent metal cation. 4-CDP-2-C-methyl-D-erythritol 2-phosphate-binding positions include 56-58, 132-135, and arginine 142; these read DIG and TTNE.

This sequence belongs to the IspF family. In terms of assembly, homotrimer. The cofactor is a divalent metal cation.

The enzyme catalyses 4-CDP-2-C-methyl-D-erythritol 2-phosphate = 2-C-methyl-D-erythritol 2,4-cyclic diphosphate + CMP. It participates in isoprenoid biosynthesis; isopentenyl diphosphate biosynthesis via DXP pathway; isopentenyl diphosphate from 1-deoxy-D-xylulose 5-phosphate: step 4/6. Its function is as follows. Involved in the biosynthesis of isopentenyl diphosphate (IPP) and dimethylallyl diphosphate (DMAPP), two major building blocks of isoprenoid compounds. Catalyzes the conversion of 4-diphosphocytidyl-2-C-methyl-D-erythritol 2-phosphate (CDP-ME2P) to 2-C-methyl-D-erythritol 2,4-cyclodiphosphate (ME-CPP) with a corresponding release of cytidine 5-monophosphate (CMP). This is 2-C-methyl-D-erythritol 2,4-cyclodiphosphate synthase from Chlorobaculum tepidum (strain ATCC 49652 / DSM 12025 / NBRC 103806 / TLS) (Chlorobium tepidum).